Here is a 268-residue protein sequence, read N- to C-terminus: HTH-type transcriptional activator RhaS (268 aa).

In terms of domain architecture, HTH araC/xylS-type spans 171–268 (RQMIRWLENN…YSIAPRELRI (98 aa)). DNA-binding regions (H-T-H motif) lie at residues 188–209 (EELAEKFALPIRTLHRYIKSQT) and 236–259 (IINIAYDCGFNDSSYFSTCFKNEY).

In terms of assembly, binds DNA as a dimer.

It localises to the cytoplasm. Its function is as follows. Activates expression of the rhaBAD and rhaT operons. In Mannheimia succiniciproducens (strain KCTC 0769BP / MBEL55E), this protein is HTH-type transcriptional activator RhaS.